The following is a 177-amino-acid chain: Large ribosomal subunit protein uL6 (177 aa).

The protein belongs to the universal ribosomal protein uL6 family. Part of the 50S ribosomal subunit.

In terms of biological role, this protein binds to the 23S rRNA, and is important in its secondary structure. It is located near the subunit interface in the base of the L7/L12 stalk, and near the tRNA binding site of the peptidyltransferase center. The protein is Large ribosomal subunit protein uL6 of Methanosarcina barkeri (strain Fusaro / DSM 804).